A 294-amino-acid chain; its full sequence is Nucleotide-binding protein lp_0779 (294 aa).

12-19 (GMSGAGKT) contacts ATP. 62–65 (DLRS) is a GTP binding site.

The protein belongs to the RapZ-like family.

Functionally, displays ATPase and GTPase activities. In Lactiplantibacillus plantarum (strain ATCC BAA-793 / NCIMB 8826 / WCFS1) (Lactobacillus plantarum), this protein is Nucleotide-binding protein lp_0779.